We begin with the raw amino-acid sequence, 100 residues long: Ribosomal processing cysteine protease Prp (100 aa).

H16 (proton donor) is an active-site residue. C28 acts as the Nucleophile in catalysis.

It belongs to the Prp family. In terms of assembly, homodimer.

Functionally, an essential cysteine protease that cleaves the N-terminus from ribosomal protein bL27. This is Ribosomal processing cysteine protease Prp from Mycoplasma pneumoniae (strain ATCC 29342 / M129 / Subtype 1) (Mycoplasmoides pneumoniae).